Here is a 122-residue protein sequence, read N- to C-terminus: Large ribosomal subunit protein uL14 (122 aa).

This sequence belongs to the universal ribosomal protein uL14 family. In terms of assembly, part of the 50S ribosomal subunit. Forms a cluster with proteins L3 and L19. In the 70S ribosome, L14 and L19 interact and together make contacts with the 16S rRNA in bridges B5 and B8.

Its function is as follows. Binds to 23S rRNA. Forms part of two intersubunit bridges in the 70S ribosome. This is Large ribosomal subunit protein uL14 from Exiguobacterium sibiricum (strain DSM 17290 / CCUG 55495 / CIP 109462 / JCM 13490 / 255-15).